The following is a 441-amino-acid chain: Protein translocase subunit SecY (441 aa).

10 helical membrane-spanning segments follow: residues 18–38 (ILFTLGIVILYRVGAALPSPG), 78–98 (AVGVMPYITASIIVQLLTVVI), 124–144 (IALAILQATSIVALAANGGLL), 157–177 (IFTLVVIVLVMTGGAALVMWM), 180–200 (LITERGIGNGMSLLIFVGIAA), 215–235 (GVVFTAVCAAALIIIVGVVFV), 272–292 (VIPVIFASSLIYIPHLITQLI), 318–338 (LVYIGIYFGLIIFFTYFYVSI), 382–402 (IYLGVIAVLPNLFLQIGAGGT), and 403–423 (VQNLPFGGTAVLIMIGVGLDT).

It belongs to the SecY/SEC61-alpha family. Component of the Sec protein translocase complex. Heterotrimer consisting of SecY, SecE and SecG subunits. The heterotrimers can form oligomers, although 1 heterotrimer is thought to be able to translocate proteins. Interacts with the ribosome. Interacts with SecDF, and other proteins may be involved. Interacts with SecA.

The protein localises to the cell membrane. In terms of biological role, the central subunit of the protein translocation channel SecYEG. Consists of two halves formed by TMs 1-5 and 6-10. These two domains form a lateral gate at the front which open onto the bilayer between TMs 2 and 7, and are clamped together by SecE at the back. The channel is closed by both a pore ring composed of hydrophobic SecY resides and a short helix (helix 2A) on the extracellular side of the membrane which forms a plug. The plug probably moves laterally to allow the channel to open. The ring and the pore may move independently. In Mycobacterium bovis (strain ATCC BAA-935 / AF2122/97), this protein is Protein translocase subunit SecY.